The chain runs to 162 residues: Transcription antitermination protein RfaH (162 aa).

It belongs to the RfaH family. As to quaternary structure, interacts with both the nontemplate DNA and the RNA polymerase (RNAP).

Its function is as follows. Enhances distal genes transcription elongation in a specialized subset of operons that encode extracytoplasmic components. RfaH is recruited into a multi-component RNA polymerase complex by the ops element, which is a short conserved DNA sequence located downstream of the main promoter of these operons. Once bound, RfaH suppresses pausing and inhibits Rho-dependent and intrinsic termination at a subset of sites. Termination signals are bypassed, which allows complete synthesis of long RNA chains. Also negatively controls expression and surface presentation of AG43 and possibly another AG43-independent factor that mediates cell-cell interactions and biofilm formation,. This Escherichia coli O6:K15:H31 (strain 536 / UPEC) protein is Transcription antitermination protein RfaH.